A 624-amino-acid polypeptide reads, in one-letter code: Aliphatic sulfonate oxidoreductase, WOR-like subunit (624 aa).

Tungstopterin contacts are provided by K77, S93, V94, S96, H195, A196, G198, and Y199. [4Fe-4S] cluster contacts are provided by D299, C302, and C306. The tungstopterin site is built by D353, L357, D358, G359, T470, D490, I494, C495, and N496. Residue C495 coordinates [4Fe-4S] cluster. Residues 552–575 (KDDDNPPRFYEPLPSGPVKGKAPN) are disordered.

It belongs to the AOR/FOR family. Heterodimer composed of a small WOR5-S subunit, with four [4Fe-4S] clusters, and a large WOR5-L subunit, containing the active site tungsto-bispyranopterin cofactor as well as another [4Fe-4S] cluster. It depends on [4Fe-4S] cluster as a cofactor. Tungstopterin is required as a cofactor.

Its subcellular location is the cytoplasm. The catalysed reaction is an aliphatic sulfonate + 4 oxidized [4Fe-4S]-[ferredoxin] + 2 H2O = 4 reduced [4Fe-4S]-[ferredoxin] + a carboxylate + sulfite + 6 H(+). The enzyme catalyses an aliphatic sulfonate + 2 oxidized [4Fe-4S]-[ferredoxin] + H2O = 2 reduced [4Fe-4S]-[ferredoxin] + an aldehyde + sulfite + 3 H(+). It catalyses the reaction 2 oxidized [4Fe-4S]-[ferredoxin] + an aldehyde + H2O = 2 reduced [4Fe-4S]-[ferredoxin] + a carboxylate + 3 H(+). It carries out the reaction 4 oxidized [4Fe-4S]-[ferredoxin] + taurine + 2 H2O = 4 reduced [4Fe-4S]-[ferredoxin] + sulfite + glycine + 6 H(+). The catalysed reaction is 2 oxidized [4Fe-4S]-[ferredoxin] + taurine + H2O = aminoacetaldehyde + 2 reduced [4Fe-4S]-[ferredoxin] + sulfite + 3 H(+). The enzyme catalyses aminoacetaldehyde + 2 oxidized [4Fe-4S]-[ferredoxin] + H2O = 2 reduced [4Fe-4S]-[ferredoxin] + glycine + 3 H(+). WOR-like catalytic subunit of an oxidoreductase that can desulfonate and oxidize aliphatic sulfonates such as taurine. The activity involves two steps: an oxidative desulfonation reaction, followed by the activation of a second water molecule and oxidation of the resulting aldehyde. May be involved in the oxidation of various aliphatic sulfonates and also phosphonates. In vitro, has a broad substrate specificity with a high affinity for several substituted and nonsubstituted aliphatic and aromatic aldehydes with various chain lengths, with methyl viologen or benzyl viologen as electron acceptor. Ferredoxin is the physiological electron acceptor. This is Aliphatic sulfonate oxidoreductase, WOR-like subunit from Pyrococcus furiosus (strain ATCC 43587 / DSM 3638 / JCM 8422 / Vc1).